Reading from the N-terminus, the 434-residue chain is Phosphomethylpyrimidine synthase (434 aa).

Residues asparagine 74, methionine 103, tyrosine 132, histidine 171, 193–195 (SRG), 234–237 (DGIR), and glutamate 273 contribute to the substrate site. Histidine 277 is a binding site for Zn(2+). Tyrosine 300 contacts substrate. Zn(2+) is bound at residue histidine 341. Residues cysteine 417, cysteine 420, and cysteine 424 each coordinate [4Fe-4S] cluster.

Belongs to the ThiC family. As to quaternary structure, homodimer. Requires [4Fe-4S] cluster as cofactor.

The enzyme catalyses 5-amino-1-(5-phospho-beta-D-ribosyl)imidazole + S-adenosyl-L-methionine = 4-amino-2-methyl-5-(phosphooxymethyl)pyrimidine + CO + 5'-deoxyadenosine + formate + L-methionine + 3 H(+). The protein operates within cofactor biosynthesis; thiamine diphosphate biosynthesis. Functionally, catalyzes the synthesis of the hydroxymethylpyrimidine phosphate (HMP-P) moiety of thiamine from aminoimidazole ribotide (AIR) in a radical S-adenosyl-L-methionine (SAM)-dependent reaction. This chain is Phosphomethylpyrimidine synthase, found in Desulfotalea psychrophila (strain LSv54 / DSM 12343).